The following is a 265-amino-acid chain: MTQGKNPGLKAGGGKKGAKKRTIDPLSRKEWYDFRAPIPFSSKSFGKTLVTKSSGNRIASEEIKGRVVESTLADLKDNSNDKAWRKVKLVIDEVDGRNAKTSFYGLDITRDRLCSMIRKWQTLIEARVDCKTNDGYIIRVFTLAFTKKTSAGKQSSTSTCYAKSSQVRAIRRKINTFITNEAAKLGIAEFSKNLIGEDYTKKIEKETKNIFPLQNITIRKVKVLKRPKLDATKIAELYSHEKKGEKATGRDGAPEEQAAQNLLAQ.

Disordered stretches follow at residues 1-24 (MTQG…RTID) and 240-265 (HEKK…LLAQ). Residues 240-253 (HEKKGEKATGRDGA) show a composition bias toward basic and acidic residues.

It belongs to the eukaryotic ribosomal protein eS1 family. In terms of assembly, component of the small ribosomal subunit. Mature ribosomes consist of a small (40S) and a large (60S) subunit. The 40S subunit contains about 33 different proteins and 1 molecule of RNA (18S). The 60S subunit contains about 49 different proteins and 3 molecules of RNA (25S, 5.8S and 5S).

The protein localises to the cytoplasm. The protein is Small ribosomal subunit protein eS1 of Tetrahymena thermophila (strain SB210).